Consider the following 224-residue polypeptide: Glutathione S-transferase U28 (224 aa).

Residues 6–85 (SKVVVLDFWA…YIDETWTDAA (80 aa)) form the GST N-terminal domain. Residues 16-17 (SP), 42-43 (NK), 56-57 (KV), and 69-70 (ES) contribute to the glutathione site. Residues 91–217 (DPQSRATARF…EKVYQQVLKL (127 aa)) enclose the GST C-terminal domain. Thr-154 carries the phosphothreonine modification.

It belongs to the GST superfamily. Tau family.

The protein resides in the cytoplasm. Its subcellular location is the cytosol. It catalyses the reaction RX + glutathione = an S-substituted glutathione + a halide anion + H(+). May be involved in the conjugation of reduced glutathione to a wide number of exogenous and endogenous hydrophobic electrophiles and have a detoxification role against certain herbicides. This Arabidopsis thaliana (Mouse-ear cress) protein is Glutathione S-transferase U28 (GSTU28).